The sequence spans 142 residues: Large ribosomal subunit protein uL11 (142 aa).

It belongs to the universal ribosomal protein uL11 family. Part of the ribosomal stalk of the 50S ribosomal subunit. Interacts with L10 and the large rRNA to form the base of the stalk. L10 forms an elongated spine to which L12 dimers bind in a sequential fashion forming a multimeric L10(L12)X complex. In terms of processing, one or more lysine residues are methylated.

Functionally, forms part of the ribosomal stalk which helps the ribosome interact with GTP-bound translation factors. The polypeptide is Large ribosomal subunit protein uL11 (Klebsiella pneumoniae (strain 342)).